Consider the following 546-residue polypeptide: 3-(3-hydroxy-phenyl)propionate/3-hydroxycinnamic acid hydroxylase 2 (546 aa).

FAD is bound by residues 10-39 (SVAI…VVER) and 278-288 (FVAGRIALVGD).

It belongs to the PheA/TfdB FAD monooxygenase family. FAD serves as cofactor.

The catalysed reaction is 3-(3-hydroxyphenyl)propanoate + NADH + O2 + H(+) = 3-(2,3-dihydroxyphenyl)propanoate + NAD(+) + H2O. It carries out the reaction (2E)-3-(3-hydroxyphenyl)prop-2-enoate + NADH + O2 + H(+) = (2E)-3-(2,3-dihydroxyphenyl)prop-2-enoate + NAD(+) + H2O. It functions in the pathway aromatic compound metabolism; 3-phenylpropanoate degradation. In terms of biological role, catalyzes the insertion of one atom of molecular oxygen into position 2 of the phenyl ring of 3-(3-hydroxyphenyl)propionate (3-HPP) and hydroxycinnamic acid (3HCI). This Burkholderia vietnamiensis (strain G4 / LMG 22486) (Burkholderia cepacia (strain R1808)) protein is 3-(3-hydroxy-phenyl)propionate/3-hydroxycinnamic acid hydroxylase 2.